The sequence spans 415 residues: Hepatocyte nuclear factor 3-beta (415 aa).

Positions 150–244 (KPPYSYISLI…ENGCYLRRQK (95 aa)) form a DNA-binding region, fork-head. Positions 251 to 262 (KMSMKEPGRKGG) are enriched in basic and acidic residues. The segment at 251–324 (KMSMKEPGRK…GQHLMSQHHS (74 aa)) is disordered. Positions 266–277 (SANSSSDSCNGN) are enriched in low complexity. The segment covering 310-323 (SPVSQGQHLMSQHH) has biased composition (polar residues).

The protein resides in the nucleus. Its function is as follows. Transcription activator for a number of liver genes. Interacts with the cis-acting regulatory regions of these genes. The polypeptide is Hepatocyte nuclear factor 3-beta (foxa2) (Oryzias latipes (Japanese rice fish)).